The chain runs to 177 residues: MSRVAKAPVNIPAGIEVKINGQLLTVKGKNGELSREIHNAVEVNQDANALTFVPREGVANADAQAGTARALVNAMVIGVTEGFTKKLQLVGVGYRAQMKGNVVALSLGYSHPIEHTLPLGVTGECPSQTEIILKSADKQLIGQVAADIRAYRRPEPYKGKGVRYSDEVVRTKEAKKK.

Belongs to the universal ribosomal protein uL6 family. As to quaternary structure, part of the 50S ribosomal subunit.

This protein binds to the 23S rRNA, and is important in its secondary structure. It is located near the subunit interface in the base of the L7/L12 stalk, and near the tRNA binding site of the peptidyltransferase center. In Haemophilus ducreyi (strain 35000HP / ATCC 700724), this protein is Large ribosomal subunit protein uL6.